A 592-amino-acid chain; its full sequence is Aspartate--tRNA(Asp/Asn) ligase (592 aa).

L-aspartate is bound at residue Glu-175. The aspartate stretch occupies residues 199–202 (QLFK). Residue Arg-221 coordinates L-aspartate. ATP is bound by residues 221–223 (RDE) and Gln-230. Residue His-450 participates in L-aspartate binding. Residue Glu-483 coordinates ATP. Position 490 (Arg-490) interacts with L-aspartate. 535 to 538 (GLDR) is a binding site for ATP.

It belongs to the class-II aminoacyl-tRNA synthetase family. Type 1 subfamily. Homodimer.

Its subcellular location is the cytoplasm. The catalysed reaction is tRNA(Asx) + L-aspartate + ATP = L-aspartyl-tRNA(Asx) + AMP + diphosphate. Functionally, aspartyl-tRNA synthetase with relaxed tRNA specificity since it is able to aspartylate not only its cognate tRNA(Asp) but also tRNA(Asn). Reaction proceeds in two steps: L-aspartate is first activated by ATP to form Asp-AMP and then transferred to the acceptor end of tRNA(Asp/Asn). This chain is Aspartate--tRNA(Asp/Asn) ligase, found in Acinetobacter baylyi (strain ATCC 33305 / BD413 / ADP1).